The sequence spans 90 residues: UPF0237 protein MMP0657 (90 aa).

An ACT domain is found at 5-79 (VITVVGVDKP…SEIGVKINVQ (75 aa)).

The protein belongs to the UPF0237 family.

In Methanococcus maripaludis (strain DSM 14266 / JCM 13030 / NBRC 101832 / S2 / LL), this protein is UPF0237 protein MMP0657.